Reading from the N-terminus, the 120-residue chain is Large ribosomal subunit protein bL21 (120 aa).

The protein belongs to the bacterial ribosomal protein bL21 family. In terms of assembly, part of the 50S ribosomal subunit. Contacts protein L20.

This protein binds to 23S rRNA in the presence of protein L20. The protein is Large ribosomal subunit protein bL21 of Roseiflexus castenholzii (strain DSM 13941 / HLO8).